Consider the following 98-residue polypeptide: NADH-ubiquinone oxidoreductase chain 4L (98 aa).

3 consecutive transmembrane segments (helical) span residues 2–22 (PSISTNIILAFITALLGMLIF), 29–49 (SLLCLEGMMLSMFILSTLTIL), and 61–81 (ILLLVFAACEAAVGLALLVTV).

The protein belongs to the complex I subunit 4L family. As to quaternary structure, core subunit of respiratory chain NADH dehydrogenase (Complex I) which is composed of 45 different subunits.

Its subcellular location is the mitochondrion inner membrane. It carries out the reaction a ubiquinone + NADH + 5 H(+)(in) = a ubiquinol + NAD(+) + 4 H(+)(out). Core subunit of the mitochondrial membrane respiratory chain NADH dehydrogenase (Complex I) which catalyzes electron transfer from NADH through the respiratory chain, using ubiquinone as an electron acceptor. Part of the enzyme membrane arm which is embedded in the lipid bilayer and involved in proton translocation. This is NADH-ubiquinone oxidoreductase chain 4L (MT-ND4L) from Eulemur coronatus (Crowned lemur).